A 393-amino-acid polypeptide reads, in one-letter code: NAD(P)H-quinone oxidoreductase subunit H, chloroplastic (393 aa).

The protein belongs to the complex I 49 kDa subunit family. In terms of assembly, NDH is composed of at least 16 different subunits, 5 of which are encoded in the nucleus.

The protein localises to the plastid. Its subcellular location is the chloroplast thylakoid membrane. It catalyses the reaction a plastoquinone + NADH + (n+1) H(+)(in) = a plastoquinol + NAD(+) + n H(+)(out). The enzyme catalyses a plastoquinone + NADPH + (n+1) H(+)(in) = a plastoquinol + NADP(+) + n H(+)(out). In terms of biological role, NDH shuttles electrons from NAD(P)H:plastoquinone, via FMN and iron-sulfur (Fe-S) centers, to quinones in the photosynthetic chain and possibly in a chloroplast respiratory chain. The immediate electron acceptor for the enzyme in this species is believed to be plastoquinone. Couples the redox reaction to proton translocation, and thus conserves the redox energy in a proton gradient. The sequence is that of NAD(P)H-quinone oxidoreductase subunit H, chloroplastic from Nicotiana sylvestris (Wood tobacco).